A 37-amino-acid polypeptide reads, in one-letter code: Large ribosomal subunit protein bL36c (37 aa).

Belongs to the bacterial ribosomal protein bL36 family.

It is found in the plastid. The polypeptide is Large ribosomal subunit protein bL36c (Aneura mirabilis (Parasitic liverwort)).